We begin with the raw amino-acid sequence, 418 residues long: Glutamate dehydrogenase (418 aa).

The active site involves K105. G217–Y223 lines the NAD(+) pocket.

This sequence belongs to the Glu/Leu/Phe/Val dehydrogenases family. As to quaternary structure, homohexamer.

The protein resides in the cytoplasm. The enzyme catalyses L-glutamate + NAD(+) + H2O = 2-oxoglutarate + NH4(+) + NADH + H(+). It catalyses the reaction L-glutamate + NADP(+) + H2O = 2-oxoglutarate + NH4(+) + NADPH + H(+). The protein is Glutamate dehydrogenase (gdhA) of Aeropyrum pernix (strain ATCC 700893 / DSM 11879 / JCM 9820 / NBRC 100138 / K1).